A 398-amino-acid chain; its full sequence is uncharacterized protein (398 aa).

Positions 313–398 are disordered; it reads KTIKSSGSKT…TSKSIKYYEV (86 aa). Composition is skewed to low complexity over residues 314–333 and 343–398; these read TIKS…TNKS and GSKT…YYEV.

This is an uncharacterized protein from Acanthamoeba polyphaga mimivirus (APMV).